Consider the following 190-residue polypeptide: Segregation and condensation protein B (190 aa).

This sequence belongs to the ScpB family. In terms of assembly, homodimer. Homodimerization may be required to stabilize the binding of ScpA to the Smc head domains. Component of a cohesin-like complex composed of ScpA, ScpB and the Smc homodimer, in which ScpA and ScpB bind to the head domain of Smc. The presence of the three proteins is required for the association of the complex with DNA.

The protein localises to the cytoplasm. Functionally, participates in chromosomal partition during cell division. May act via the formation of a condensin-like complex containing Smc and ScpA that pull DNA away from mid-cell into both cell halves. The protein is Segregation and condensation protein B of Bacillus cereus (strain G9842).